A 332-amino-acid polypeptide reads, in one-letter code: Endo-1,4-beta-xylanase (332 aa).

Positions 1–21 are cleaved as a signal peptide; it reads MLSSTTLLAILSALALTSVQA. The GH10 domain occupies 26-316; the sequence is KNSLDYLANK…KSTYYVVQQA (291 aa). The Proton donor role is filled by Glu-120. A disulfide bond links Cys-128 and Cys-160. The active-site Nucleophile is the Glu-214. An intrachain disulfide couples Cys-247 to Cys-253.

It belongs to the glycosyl hydrolase 10 (cellulase F) family.

It localises to the secreted. The catalysed reaction is Endohydrolysis of (1-&gt;4)-beta-D-xylosidic linkages in xylans.. Functionally, requires at least three xylose residues for catalytic activity. Does not have activity against xylobiose. This is Endo-1,4-beta-xylanase from Naganishia albida (Cryptococcus albidus).